The chain runs to 339 residues: MIDKIKQHIEEAKAFNEKNKESLEQFRIKYLGSKGLLKELFNEFKNIPNDQKKDFGQVINTLKAVAEEKVKQIQEELESKEESKGVFGDLTRAAEPVIIGSRHPISIVKNQIIDIFANIGFNVSEGPEIEDDWHNFTALNLPEYHPARDMQDTFFIQTNPDVLLRTHTSSVQVRYMENHKPPIRTISPGRVFRNEAISSRSHCIFHQVEGLYIDKDVSFADLKQTLLYFTKEMFGKSKIRLRPSYFPFTEPSAEIDIYWGLKTETDYRITKGTGWLEIGGCGMVDPNVLKNCDINPDEYNGFAFGMGVERIAMLLYQIGDIRMFYENDVRFLEQFKANI.

A Mg(2+)-binding site is contributed by glutamate 250.

This sequence belongs to the class-II aminoacyl-tRNA synthetase family. Phe-tRNA synthetase alpha subunit type 1 subfamily. As to quaternary structure, tetramer of two alpha and two beta subunits. Mg(2+) serves as cofactor.

The protein resides in the cytoplasm. The catalysed reaction is tRNA(Phe) + L-phenylalanine + ATP = L-phenylalanyl-tRNA(Phe) + AMP + diphosphate + H(+). This Flavobacterium johnsoniae (strain ATCC 17061 / DSM 2064 / JCM 8514 / BCRC 14874 / CCUG 350202 / NBRC 14942 / NCIMB 11054 / UW101) (Cytophaga johnsonae) protein is Phenylalanine--tRNA ligase alpha subunit.